The primary structure comprises 388 residues: MKHLHRFFSSDASGGIILIIAAILAMIMANSGATSGWYHDFLETPVQLRVGSLEINKNMLLWINDALMAVFFLLVGLEVKRELMQGSLASLLQAAFPVIAAIGGMIVPALLYLAFNYADPITREGWAIPAATDIAFALGVLALLGSRVPLVLKIFLMALAIIDDLGAIIIIALFYTNDLSMASLGVAAVAIAVLAVLNLCGVRRTGVYILVGVVLWTAVLKSGVHATLAGVIVGFFIPLKEKHGRSPAKRLEHVLHPWVAYLILPLFAFANAGVSLQGVTLDGLTSILPLGIIAGLLIGKPLGISLFCWLALRLKLAHLPEGTTYQQIMVVGILCGIGFTMSIFIASLAFGSVDPELINWAKLGILVGSISSAVIGYSWLRVRLRPSV.

Over 1–11 (MKHLHRFFSSD) the chain is Cytoplasmic. The helical transmembrane segment at 12–31 (ASGGIILIIAAILAMIMANS) threads the bilayer. Residues 32 to 58 (GATSGWYHDFLETPVQLRVGSLEINKN) are Periplasmic-facing. The helical transmembrane segment at 59 to 80 (MLLWINDALMAVFFLLVGLEVK) threads the bilayer. The Cytoplasmic segment spans residues 81-96 (RELMQGSLASLLQAAF). A helical membrane pass occupies residues 97 to 116 (PVIAAIGGMIVPALLYLAFN). Topologically, residues 117–122 (YADPIT) are periplasmic. Residues 123-130 (REGWAIPA) traverse the membrane as a helical segment. Residues 131 to 154 (ATDIAFALGVLALLGSRVPLVLKI) lie on the Cytoplasmic side of the membrane. A helical membrane pass occupies residues 155-176 (FLMALAIIDDLGAIIIIALFYT). Topologically, residues 177–180 (NDLS) are periplasmic. Residues 181–200 (MASLGVAAVAIAVLAVLNLC) traverse the membrane as a helical segment. Over 201–204 (GVRR) the chain is Cytoplasmic. The helical transmembrane segment at 205–222 (TGVYILVGVVLWTAVLKS) threads the bilayer. Residue glycine 223 is a topological domain, periplasmic. Residues 224–236 (VHATLAGVIVGFF) traverse the membrane as a helical segment. The Cytoplasmic portion of the chain corresponds to 237–253 (IPLKEKHGRSPAKRLEH). The chain crosses the membrane as a helical span at residues 254–272 (VLHPWVAYLILPLFAFANA). Residues 273 to 286 (GVSLQGVTLDGLTS) are Periplasmic-facing. Residues 287–310 (ILPLGIIAGLLIGKPLGISLFCWL) traverse the membrane as a helical segment. Residues 311-339 (ALRLKLAHLPEGTTYQQIMVVGILCGIGF) are Cytoplasmic-facing. A helical membrane pass occupies residues 340-350 (TMSIFIASLAF). Residues 351-357 (GSVDPEL) lie on the Periplasmic side of the membrane. A helical membrane pass occupies residues 358-380 (INWAKLGILVGSISSAVIGYSWL). Residues 381–388 (RVRLRPSV) are Cytoplasmic-facing.

Belongs to the NhaA Na(+)/H(+) (TC 2.A.33) antiporter family.

The protein localises to the cell inner membrane. The enzyme catalyses Na(+)(in) + 2 H(+)(out) = Na(+)(out) + 2 H(+)(in). Its function is as follows. Na(+)/H(+) antiporter that extrudes sodium in exchange for external protons. The chain is Na(+)/H(+) antiporter NhaA from Shigella flexneri serotype 5b (strain 8401).